The primary structure comprises 102 residues: Small ribosomal subunit protein uS10 (102 aa).

The segment at 34 to 58 (LSGPVPLPTKTLEIPARKSPDGEGT) is disordered.

This sequence belongs to the universal ribosomal protein uS10 family. Part of the 30S ribosomal subunit.

Functionally, involved in the binding of tRNA to the ribosomes. The protein is Small ribosomal subunit protein uS10 of Natronomonas pharaonis (strain ATCC 35678 / DSM 2160 / CIP 103997 / JCM 8858 / NBRC 14720 / NCIMB 2260 / Gabara) (Halobacterium pharaonis).